The chain runs to 616 residues: Probable beta-hexosaminidase ARB_01353 (616 aa).

Positions 1 to 20 (MRFAKALAITAVLLSGVVEA) are cleaved as a signal peptide. The interval 96–117 (KFDPFPDQSSKPKEKRQNAPPG) is disordered. Asparagine 333 carries an N-linked (GlcNAc...) asparagine glycan. The Proton donor role is filled by glutamate 361.

This sequence belongs to the glycosyl hydrolase 20 family.

It is found in the secreted. It catalyses the reaction Hydrolysis of terminal non-reducing N-acetyl-D-hexosamine residues in N-acetyl-beta-D-hexosaminides.. Beta-hexosaminidase that shows a broad substrate specificity. The chain is Probable beta-hexosaminidase ARB_01353 from Arthroderma benhamiae (strain ATCC MYA-4681 / CBS 112371) (Trichophyton mentagrophytes).